We begin with the raw amino-acid sequence, 343 residues long: HTH-type transcriptional regulator GntR (343 aa).

An HTH lacI-type domain is found at 16–70 (PTLNEVARRAGVSPITASRALRGVASVAEELAQKVRDAARELGYVANPAARALAS). Residues 18–37 (LNEVARRAGVSPITASRALR) constitute a DNA-binding region (H-T-H motif).

Its activity is regulated as follows. Free GntR fails to recognize gluconate and 6-phosphogluconate, whereas the GntR/DNA complexes recognize both ligands. It is therefore likely that GntR DNA binding induces structural changes that permit GntR to recognize effectors. Involved in the regulation of glucose metabolism. Represses its own expression as well as that of the gluconate permease GntP. It employs an effector mediated de-repression mechanism: in the absence of ligand, GntR binds to the gntR and gntP promoters and represses their expression. The release of promoter bound GntR is induced by gluconate and 6-phosphogluconate that bind with similar apparent affinities to the GntR/DNA complex. The release of GntR leads to transcription of the genes. The sequence is that of HTH-type transcriptional regulator GntR from Pseudomonas aeruginosa (strain ATCC 15692 / DSM 22644 / CIP 104116 / JCM 14847 / LMG 12228 / 1C / PRS 101 / PAO1).